Consider the following 606-residue polypeptide: Ectonucleoside triphosphate diphosphohydrolase 7 (606 aa).

Residues 1–28 (MARISFSYLCPASWYFTVPTVSPFLRQR) lie on the Cytoplasmic side of the membrane. The chain crosses the membrane as a helical span at residues 29–49 (VAFLGLFFIPCVLLLLLIMDL). Over 50–548 (RHWATSLPRD…PAHGSWLRLS (499 aa)) the chain is Vesicular. Glu-217 serves as the catalytic Proton acceptor. N-linked (GlcNAc...) asparagine glycosylation is present at Asn-330. Cys-448 and Cys-477 form a disulfide bridge. Residues 549–569 (FVYNHYLFFACTLVVLLAIVL) traverse the membrane as a helical segment. Residues 570–606 (YLLRIHRIHRRQTRASAPLDLLWIEQVVPMIGVQVGP) are Cytoplasmic-facing.

It belongs to the GDA1/CD39 NTPase family. It depends on Ca(2+) as a cofactor. The cofactor is Mg(2+). As to expression, widely expressed. Expressed at high level in brain, kidney, liver, testis and small intestin. Weakly expressed in lung, thymus and heart.

The protein localises to the cytoplasmic vesicle membrane. The catalysed reaction is a ribonucleoside 5'-triphosphate + H2O = a ribonucleoside 5'-diphosphate + phosphate + H(+). It carries out the reaction UTP + H2O = UDP + phosphate + H(+). It catalyses the reaction GTP + H2O = GDP + phosphate + H(+). The enzyme catalyses CTP + H2O = CDP + phosphate + H(+). The catalysed reaction is ATP + H2O = ADP + phosphate + H(+). Functionally, catalyzes the hydrolysis of nucleoside triphosphates and diphosphates in a calcium- or magnesium-dependent manner. Preferentially hydrolyzes nucleoside 5'-triphosphates, with substrate preference for UTP &gt; GTP &gt; CTP. Hydrolyzes nucleoside diphosphates only to a minor extent. In contrast to its human ortholog is able to hydrolyze ATP. In the epithelial cells of small intestine controls luminal ATP levels, therefore regulating Th17-cell development. This chain is Ectonucleoside triphosphate diphosphohydrolase 7 (Entpd7), found in Mus musculus (Mouse).